Here is a 423-residue protein sequence, read N- to C-terminus: Glutamate-1-semialdehyde 2,1-aminomutase (423 aa).

Residue Lys262 is modified to N6-(pyridoxal phosphate)lysine.

This sequence belongs to the class-III pyridoxal-phosphate-dependent aminotransferase family. HemL subfamily. As to quaternary structure, homodimer. Pyridoxal 5'-phosphate serves as cofactor.

It localises to the cytoplasm. It carries out the reaction (S)-4-amino-5-oxopentanoate = 5-aminolevulinate. Its pathway is porphyrin-containing compound metabolism; protoporphyrin-IX biosynthesis; 5-aminolevulinate from L-glutamyl-tRNA(Glu): step 2/2. This is Glutamate-1-semialdehyde 2,1-aminomutase from Saccharophagus degradans (strain 2-40 / ATCC 43961 / DSM 17024).